The sequence spans 283 residues: Putative replication protein XF_b0001 (283 aa).

This Xylella fastidiosa (strain 9a5c) protein is Putative replication protein XF_b0001.